We begin with the raw amino-acid sequence, 227 residues long: UPF0688 protein C1orf174 homolog (227 aa).

2 disordered regions span residues 1–122 (MRKR…VSDL) and 207–227 (AKEEDEDDDDYVDGLANEGNI). Over residues 47-63 (TEKESSKKLRKDEKGPV) the composition is skewed to basic and acidic residues. Polar residues-rich tracts occupy residues 77–104 (AASNESSNVNDSQQSEKSITNTKDNGTR) and 113–122 (RLPSSPVSDL).

Belongs to the UPF0688 family.

The protein resides in the nucleus. The protein is UPF0688 protein C1orf174 homolog of Xenopus tropicalis (Western clawed frog).